The primary structure comprises 99 residues: Small ribosomal subunit protein bS18 (99 aa).

The tract at residues Met1–Gln25 is disordered.

The protein belongs to the bacterial ribosomal protein bS18 family. As to quaternary structure, part of the 30S ribosomal subunit. Forms a tight heterodimer with protein bS6.

Its function is as follows. Binds as a heterodimer with protein bS6 to the central domain of the 16S rRNA, where it helps stabilize the platform of the 30S subunit. The polypeptide is Small ribosomal subunit protein bS18 (Solibacter usitatus (strain Ellin6076)).